The following is a 181-amino-acid chain: Adenylate kinase (181 aa).

10-15 (GAGKGT) lines the ATP pocket. Residues 30-59 (STGELFRKNIQDGTKLGIEAKRYLDAGDLV) are NMP. AMP contacts are provided by residues Thr-31, Arg-36, 57-59 (DLV), 85-88 (GYPR), and Gln-92. The tract at residues 126-132 (GRGRADD) is LID. Residue Arg-127 coordinates ATP. AMP contacts are provided by Arg-129 and Arg-140. ATP is bound at residue Gly-166.

It belongs to the adenylate kinase family. Monomer.

The protein resides in the cytoplasm. It carries out the reaction AMP + ATP = 2 ADP. The protein operates within purine metabolism; AMP biosynthesis via salvage pathway; AMP from ADP: step 1/1. Its function is as follows. Catalyzes the reversible transfer of the terminal phosphate group between ATP and AMP. Plays an important role in cellular energy homeostasis and in adenine nucleotide metabolism. This is Adenylate kinase from Mycobacterium marinum (strain ATCC BAA-535 / M).